Here is a 960-residue protein sequence, read N- to C-terminus: RasGEF domain-containing serine/threonine-protein kinase X (960 aa).

One can recognise a Protein kinase domain in the interval 21-274 (LEFNEKIGKG…FDEILSQLKV (254 aa)). ATP is bound by residues 27-35 (IGKGSFGSV) and Lys-48. The active-site Proton acceptor is Asp-140. Positions 314–368 (NISFSPNNSNNNNNNNNNISNISPDITTGIQQINLSSSGGSNNSSPSTPPQGSQL) are enriched in low complexity. 2 disordered regions span residues 314–372 (NISF…VSLA) and 393–413 (GQLS…HKPS). In terms of domain architecture, N-terminal Ras-GEF spans 437–565 (PCYAALTSHI…LGTTISNNEL (129 aa)). Positions 596–651 (NNNNNNNNNPVNNINNINNNNSVNSSSSNNNNNNNNNNSNNNNNNNNNNNNNNNNN) are disordered. In terms of domain architecture, Ras-GEF spans 712 to 957 (HSTELARQIT…KNNSLKCEPP (246 aa)).

It belongs to the protein kinase superfamily. TKL Ser/Thr protein kinase family.

It carries out the reaction L-seryl-[protein] + ATP = O-phospho-L-seryl-[protein] + ADP + H(+). The enzyme catalyses L-threonyl-[protein] + ATP = O-phospho-L-threonyl-[protein] + ADP + H(+). Its function is as follows. Promotes the exchange of Ras-bound GDP by GTP. The polypeptide is RasGEF domain-containing serine/threonine-protein kinase X (gefX) (Dictyostelium discoideum (Social amoeba)).